The primary structure comprises 422 residues: Steroid hormone receptor ERR1 (422 aa).

Residues 1–66 (MSSQVVGIEP…EGAGSGEQGS (66 aa)) are disordered. The repressor domain stretch occupies residues 1–76 (MSSQVVGIEP…GKLVLSSLPK (76 aa)). Residue K14 forms a Glycyl lysine isopeptide (Lys-Gly) (interchain with G-Cter in SUMO) linkage. Phosphoserine is present on residues S19 and S22. The segment at residues 76–151 (KRLCLVCGDV…VGMLKEGVRL (76 aa)) is a DNA-binding region (nuclear receptor). 2 NR C4-type zinc fingers span residues 79-99 (CLVC…CEAC) and 115-134 (CPAS…CQAC). N6-acetyllysine; by PCAF/KAT2B occurs at positions 129, 138, 160, and 162. A Glycyl lysine isopeptide (Lys-Gly) (interchain with G-Cter in SUMO2) cross-link involves residue K189. Residues 192–420 (PVNALVSHLL…KLFLEMLEAM (229 aa)) form the NR LBD domain. A Glycyl lysine isopeptide (Lys-Gly) (interchain with G-Cter in SUMO); alternate cross-link involves residue K402. K402 is covalently cross-linked (Glycyl lysine isopeptide (Lys-Gly) (interchain with G-Cter in SUMO2); alternate). Positions 402 to 422 (KLEGKVPMHKLFLEMLEAMMD) are AF-2 domain.

The protein belongs to the nuclear hormone receptor family. NR3 subfamily. As to quaternary structure, binds DNA as a monomer or a homodimer. Interacts (via the AF2 domain) with coactivator PPARGC1A (via the L3 motif); the interaction greatly enhances transcriptional activity of genes involved in energy metabolism. Interacts with PIAS4; the interaction enhances sumoylation. Interacts with MAPK15; promotes re-localization of ESRRA to the cytoplasm through a XPO1-dependent mechanism then inhibits ESRRA transcriptional activity. Phosphorylation on Ser-19 enhances sumoylation on Lys-14 increasing repression of transcriptional activity. Post-translationally, sumoylated with SUMO2. Main site is Lys-14 which is enhanced by phosphorylation on Ser-19, cofactor activation, and by interaction with PIAS4. Sumoylation enhances repression of transcriptional activity, but has no effect on subcellular location nor on DNA binding. In terms of processing, reversibly acetylated. Acetylation by PCAF/KAT2 at Lys-129, Lys-138, Lys-160 and Lys-162 and PCAF/KAT2 decreases transcriptional activity probably by inhibiting DNA-binding activity; deacetylation involves SIRT1 and HDAC8 and increases DNA-binding. In terms of tissue distribution, most highly expressed in kidney, heart, and brown adipocytes. Also found in uterus, cervix and vagina.

It localises to the nucleus. It is found in the cytoplasm. In terms of biological role, binds to an ERR-alpha response element (ERRE) containing a single consensus half-site, 5'-TNAAGGTCA-3'. Can bind to the medium-chain acyl coenzyme A dehydrogenase (MCAD) response element NRRE-1 and may act as an important regulator of MCAD promoter. Binds to the C1 region of the lactoferrin gene promoter. Requires dimerization and the coactivator, PGC-1A, for full activity. The ERRalpha/PGC1alpha complex is a regulator of energy metabolism. Induces the expression of PERM1 in the skeletal muscle. The sequence is that of Steroid hormone receptor ERR1 (Esrra) from Mus musculus (Mouse).